The chain runs to 238 residues: Large ribosomal subunit protein uL2 (238 aa).

The tract at residues 203–223 (GGGAWKHPGKPTTVSRNAPPG) is disordered.

It belongs to the universal ribosomal protein uL2 family. Part of the 50S ribosomal subunit. Forms a bridge to the 30S subunit in the 70S ribosome.

Its function is as follows. One of the primary rRNA binding proteins. Required for association of the 30S and 50S subunits to form the 70S ribosome, for tRNA binding and peptide bond formation. It has been suggested to have peptidyltransferase activity; this is somewhat controversial. Makes several contacts with the 16S rRNA in the 70S ribosome. The polypeptide is Large ribosomal subunit protein uL2 (Methanosarcina barkeri (strain Fusaro / DSM 804)).